The following is a 121-amino-acid chain: Large ribosomal subunit protein bL19 (121 aa).

The protein belongs to the bacterial ribosomal protein bL19 family.

In terms of biological role, this protein is located at the 30S-50S ribosomal subunit interface and may play a role in the structure and function of the aminoacyl-tRNA binding site. The protein is Large ribosomal subunit protein bL19 of Symbiobacterium thermophilum (strain DSM 24528 / JCM 14929 / IAM 14863 / T).